The following is a 97-amino-acid chain: Peptide YY (97 aa).

Residues 1–28 (MVFVRRPWPALTTVLLALLVCLGALVDA) form the signal peptide. Ser-41 is subject to Phosphoserine. Tyrosine amide is present on Tyr-64. The interval 65–97 (GKRDGPDTLLSKTFFPDGEDRPVRSRSEGPDLW) is disordered. A propeptide spanning residues 68-97 (DGPDTLLSKTFFPDGEDRPVRSRSEGPDLW) is cleaved from the precursor. Positions 82 to 97 (GEDRPVRSRSEGPDLW) are enriched in basic and acidic residues.

Belongs to the NPY family. In terms of processing, the peptide YY form is cleaved at Pro-30 by the prolyl endopeptidase FAP (seprase) activity (in vitro) to generate peptide YY(3-36).

It is found in the secreted. Its function is as follows. This gut peptide inhibits exocrine pancreatic secretion, has a vasoconstrictory action and inhibitis jejunal and colonic mobility. The chain is Peptide YY (PYY) from Homo sapiens (Human).